A 251-amino-acid polypeptide reads, in one-letter code: Cytochrome c oxidase subunit 2 (251 aa).

Helical transmembrane passes span 42–62 and 83–103; these read NIMF…FTIV and IIWT…SFIL. 6 residues coordinate Cu cation: His186, Cys221, Glu223, Cys225, His229, and Met232. Residue Glu223 participates in Mg(2+) binding.

This sequence belongs to the cytochrome c oxidase subunit 2 family. In terms of assembly, component of the cytochrome c oxidase (complex IV, CIV), a multisubunit enzyme composed of a catalytic core of 3 subunits and several supernumerary subunits. The complex exists as a monomer or a dimer and forms supercomplexes (SCs) in the inner mitochondrial membrane with ubiquinol-cytochrome c oxidoreductase (cytochrome b-c1 complex, complex III, CIII). Cu cation serves as cofactor.

Its subcellular location is the mitochondrion inner membrane. It carries out the reaction 4 Fe(II)-[cytochrome c] + O2 + 8 H(+)(in) = 4 Fe(III)-[cytochrome c] + 2 H2O + 4 H(+)(out). Functionally, component of the cytochrome c oxidase, the last enzyme in the mitochondrial electron transport chain which drives oxidative phosphorylation. The respiratory chain contains 3 multisubunit complexes succinate dehydrogenase (complex II, CII), ubiquinol-cytochrome c oxidoreductase (cytochrome b-c1 complex, complex III, CIII) and cytochrome c oxidase (complex IV, CIV), that cooperate to transfer electrons derived from NADH and succinate to molecular oxygen, creating an electrochemical gradient over the inner membrane that drives transmembrane transport and the ATP synthase. Cytochrome c oxidase is the component of the respiratory chain that catalyzes the reduction of oxygen to water. Electrons originating from reduced cytochrome c in the intermembrane space (IMS) are transferred via the dinuclear copper A center (CU(A)) of subunit 2 and heme A of subunit 1 to the active site in subunit 1, a binuclear center (BNC) formed by heme A3 and copper B (CU(B)). The BNC reduces molecular oxygen to 2 water molecules using 4 electrons from cytochrome c in the IMS and 4 protons from the mitochondrial matrix. This chain is Cytochrome c oxidase subunit 2 (COX2), found in Candida glabrata (strain ATCC 2001 / BCRC 20586 / JCM 3761 / NBRC 0622 / NRRL Y-65 / CBS 138) (Yeast).